Reading from the N-terminus, the 342-residue chain is Anthranilate phosphoribosyltransferase (342 aa).

Residues glycine 81, 84 to 85 (GD), 91 to 94 (NVSS), 109 to 117 (KHGNRGVSS), and serine 121 each bind 5-phospho-alpha-D-ribose 1-diphosphate. Residue glycine 81 coordinates anthranilate. Serine 93 is a binding site for Mg(2+). Asparagine 112 lines the anthranilate pocket. Residue arginine 167 participates in anthranilate binding. Mg(2+) contacts are provided by aspartate 226 and glutamate 227.

This sequence belongs to the anthranilate phosphoribosyltransferase family. In terms of assembly, homodimer. The cofactor is Mg(2+).

It carries out the reaction N-(5-phospho-beta-D-ribosyl)anthranilate + diphosphate = 5-phospho-alpha-D-ribose 1-diphosphate + anthranilate. Its pathway is amino-acid biosynthesis; L-tryptophan biosynthesis; L-tryptophan from chorismate: step 2/5. Functionally, catalyzes the transfer of the phosphoribosyl group of 5-phosphorylribose-1-pyrophosphate (PRPP) to anthranilate to yield N-(5'-phosphoribosyl)-anthranilate (PRA). The chain is Anthranilate phosphoribosyltransferase from Marinobacter nauticus (strain ATCC 700491 / DSM 11845 / VT8) (Marinobacter aquaeolei).